The primary structure comprises 451 residues: Zinc finger MYND domain-containing protein 10 homolog (451 aa).

Zn(2+) is bound by residues C412, C415, C423, C426, C432, C436, H444, and C448. Residues 412 to 448 (CATCQAKAKKKCACCKKVHYCSRDCQLKDWPQHKLVC) form an MYND-type zinc finger.

The protein belongs to the ZMYND10 family. In terms of tissue distribution, specifically expressed in cells with flagella and motile cilia: chordotonal sensory neurons and sperm.

It localises to the cytoplasm. Its subcellular location is the cell projection. The protein localises to the cilium. It is found in the dynein axonemal particle. Its function is as follows. Plays a role in axonemal structure organization and motility. May be involved in axonemal pre-assembly of inner and outer dynein arms (IDA and ODA, respectively) for proper axoneme building for cilia motility. This chain is Zinc finger MYND domain-containing protein 10 homolog, found in Drosophila melanogaster (Fruit fly).